The following is a 371-amino-acid chain: Opine oxidase subunit B (371 aa).

As to quaternary structure, heterodimer of a subunit A and a subunit B.

It participates in opine metabolism; octopine degradation. Its function is as follows. Oxidative cleavage of octopine into L-arginine and pyruvate. The sequence is that of Opine oxidase subunit B (ooxB) from Agrobacterium tumefaciens (strain Ach5).